A 298-amino-acid polypeptide reads, in one-letter code: MATKIELIKELRKSTQASVMDCKQALEKNNDDFEKAVKWLRENGIVKSTKKLNKVASEGIIVLKSNLHKAIMVEINSQTDFVAKNQELKEFSDLMLEKIFEKVNPKTELVEIEKIQINNDEKVSEKLALIASKTDEKIVLRRVVVFETKTNQIFTYLHANKRIGVIIEIQGKLNEDDGKHLAMHIAANSPQFIDQSDVNQTWLQNERNIIRSQAELEVKENPKKAIFLEKTIEGRVNKLLIDTCLINQKYLIDETKTIGQFLKEKQAKVLKFIRYEVGEGIIKETVDFVSEVNAQIKQ.

The segment at 79-82 (TDFV) is involved in Mg(2+) ion dislocation from EF-Tu.

Belongs to the EF-Ts family.

It localises to the cytoplasm. Its function is as follows. Associates with the EF-Tu.GDP complex and induces the exchange of GDP to GTP. It remains bound to the aminoacyl-tRNA.EF-Tu.GTP complex up to the GTP hydrolysis stage on the ribosome. This is Elongation factor Ts (tsf) from Mycoplasma genitalium (strain ATCC 33530 / DSM 19775 / NCTC 10195 / G37) (Mycoplasmoides genitalium).